We begin with the raw amino-acid sequence, 284 residues long: D-tagatose-1,6-bisphosphate aldolase subunit GatY (284 aa).

The Proton donor role is filled by Asp82. Residues His83 and His180 each contribute to the Zn(2+) site. Gly181 contacts dihydroxyacetone phosphate. Zn(2+) is bound at residue His208. Residues Gly209–Ser211 and Asn230–Thr233 each bind dihydroxyacetone phosphate.

This sequence belongs to the class II fructose-bisphosphate aldolase family. TagBP aldolase GatY subfamily. In terms of assembly, forms a complex with GatZ. It depends on Zn(2+) as a cofactor.

It carries out the reaction D-tagatofuranose 1,6-bisphosphate = D-glyceraldehyde 3-phosphate + dihydroxyacetone phosphate. The protein operates within carbohydrate metabolism; D-tagatose 6-phosphate degradation; D-glyceraldehyde 3-phosphate and glycerone phosphate from D-tagatose 6-phosphate: step 2/2. Catalytic subunit of the tagatose-1,6-bisphosphate aldolase GatYZ, which catalyzes the reversible aldol condensation of dihydroxyacetone phosphate (DHAP or glycerone-phosphate) with glyceraldehyde 3-phosphate (G3P) to produce tagatose 1,6-bisphosphate (TBP). Requires GatZ subunit for full activity and stability. Is involved in the catabolism of galactitol. This Escherichia coli protein is D-tagatose-1,6-bisphosphate aldolase subunit GatY (gatY).